The chain runs to 202 residues: FMN-dependent NADH:quinone oxidoreductase (202 aa).

FMN is bound by residues S10, 16–18 (SAS), and 96–99 (MWNF).

The protein belongs to the azoreductase type 1 family. As to quaternary structure, homodimer. FMN serves as cofactor.

It carries out the reaction 2 a quinone + NADH + H(+) = 2 a 1,4-benzosemiquinone + NAD(+). It catalyses the reaction N,N-dimethyl-1,4-phenylenediamine + anthranilate + 2 NAD(+) = 2-(4-dimethylaminophenyl)diazenylbenzoate + 2 NADH + 2 H(+). Its function is as follows. Quinone reductase that provides resistance to thiol-specific stress caused by electrophilic quinones. Functionally, also exhibits azoreductase activity. Catalyzes the reductive cleavage of the azo bond in aromatic azo compounds to the corresponding amines. The sequence is that of FMN-dependent NADH:quinone oxidoreductase from Beijerinckia indica subsp. indica (strain ATCC 9039 / DSM 1715 / NCIMB 8712).